A 47-amino-acid polypeptide reads, in one-letter code: Cytochrome b559 subunit beta (47 aa).

The helical transmembrane segment at 23–39 (WLAVHALAIPSVFFLGA) threads the bilayer. Residue His-27 participates in heme binding.

The protein belongs to the PsbE/PsbF family. As to quaternary structure, heterodimer of an alpha subunit and a beta subunit. PSII is composed of 1 copy each of membrane proteins PsbA, PsbB, PsbC, PsbD, PsbE, PsbF, PsbH, PsbI, PsbJ, PsbK, PsbL, PsbM, PsbT, PsbX, PsbY, Psb30/Ycf12, peripheral proteins PsbO, CyanoQ (PsbQ), PsbU, PsbV and a large number of cofactors. It forms dimeric complexes. Heme b is required as a cofactor.

The protein resides in the cellular thylakoid membrane. Functionally, this b-type cytochrome is tightly associated with the reaction center of photosystem II (PSII). PSII is a light-driven water:plastoquinone oxidoreductase that uses light energy to abstract electrons from H(2)O, generating O(2) and a proton gradient subsequently used for ATP formation. It consists of a core antenna complex that captures photons, and an electron transfer chain that converts photonic excitation into a charge separation. In Prochlorococcus marinus subsp. pastoris (strain CCMP1986 / NIES-2087 / MED4), this protein is Cytochrome b559 subunit beta.